A 289-amino-acid chain; its full sequence is Glycine--tRNA ligase alpha subunit (289 aa).

This sequence belongs to the class-II aminoacyl-tRNA synthetase family. As to quaternary structure, tetramer of two alpha and two beta subunits.

It localises to the cytoplasm. The catalysed reaction is tRNA(Gly) + glycine + ATP = glycyl-tRNA(Gly) + AMP + diphosphate. The protein is Glycine--tRNA ligase alpha subunit of Rickettsia felis (strain ATCC VR-1525 / URRWXCal2) (Rickettsia azadi).